The primary structure comprises 447 residues: MQDFWSKAMDAVAEQVSVQVFEAWIRPLKAGGEVGDGQFQVYAANDFSADWVKKRYGGLLEEILSEQLGEPVTLLFAADPALEKPVASKTQTVTPVQSGGETGDQENFHSGLDPRYTFDSFVVGGCNQFVHAAAARVAEAPAAAYNPLFIHGGVGLGKTHVMQAIGNRVLEIDPDKRVLYISSENFMTQLINSLRFKRVFDFKENFRSVDVLLVDDIQFIAGKKATQEEFFHTFNALYEAKKQIVMTADSFPHEIEHLEERLRSRFGMGLVADMQPPDLETRVAILQKKAGSEGLRLADEVAFFLADAVQTNVRELEGALIRVSAYASLTGKPITMALVKESLKDIVRGQDRAVTVEQIQKTVANYYKVKVTDLCSNSRSRIYSHPRQIAMYLCKQLTQHSYPEIGHRFGGRDHTTVLYAVSQVDKKQGSTPALADELASLKSMLQK.

The tract at residues 1–70 (MQDFWSKAMD…EEILSEQLGE (70 aa)) is domain I, interacts with DnaA modulators. Residues 70 to 110 (EPVTLLFAADPALEKPVASKTQTVTPVQSGGETGDQENFHS) form a domain II region. Positions 87 to 109 (ASKTQTVTPVQSGGETGDQENFH) are disordered. A compositionally biased stretch (polar residues) spans 88 to 99 (SKTQTVTPVQSG). The domain III, AAA+ region stretch occupies residues 111–327 (GLDPRYTFDS…GALIRVSAYA (217 aa)). Residues Gly155, Gly157, Lys158, and Thr159 each contribute to the ATP site. The interval 328-447 (SLTGKPITMA…LASLKSMLQK (120 aa)) is domain IV, binds dsDNA.

This sequence belongs to the DnaA family. In terms of assembly, oligomerizes as a right-handed, spiral filament on DNA at oriC.

Its subcellular location is the cytoplasm. Its function is as follows. Plays an essential role in the initiation and regulation of chromosomal replication. ATP-DnaA binds to the origin of replication (oriC) to initiate formation of the DNA replication initiation complex once per cell cycle. Binds the DnaA box (a 9 base pair repeat at the origin) and separates the double-stranded (ds)DNA. Forms a right-handed helical filament on oriC DNA; dsDNA binds to the exterior of the filament while single-stranded (ss)DNA is stabiized in the filament's interior. The ATP-DnaA-oriC complex binds and stabilizes one strand of the AT-rich DNA unwinding element (DUE), permitting loading of DNA polymerase. After initiation quickly degrades to an ADP-DnaA complex that is not apt for DNA replication. Binds acidic phospholipids. In Magnetococcus marinus (strain ATCC BAA-1437 / JCM 17883 / MC-1), this protein is Chromosomal replication initiator protein DnaA.